A 75-amino-acid chain; its full sequence is Probable [Fe-S]-dependent transcriptional repressor (75 aa).

Residues Cys55, Cys60, Cys63, and Cys72 each coordinate iron-sulfur cluster.

This sequence belongs to the FeoC family.

In terms of biological role, may function as a transcriptional regulator that controls feoABC expression. The polypeptide is Probable [Fe-S]-dependent transcriptional repressor (Serratia marcescens).